A 333-amino-acid chain; its full sequence is MIDTTLPLTDIHRHLDGNIRPQTILELGRQYNISLPAQSLETLIPHVQVIANEPDLVSFLTKLDWGVKVLASLDACRRVAFENIEDAARHGLHYVELRFSPGYMAMAHQLPVAGVVEAVIDGVCEGCRTFGVQAKLIGIMSRTFGEAACQQELEAFLAHRDQITALDLAGDELGFPGSLFLSHFNRARDAGWHITVHAGEAAGPESIWQAIRELGAERIGHGVKAIEDRALMDFLAEQQIGIESCLTSNIQTSTVAELAAHPLKMFLEHGIRASINTDDPGVQGVDIIHEYTVAAPAAGLSREQIRQAQINGLEMAFLSAEEKRALREKVAAK.

Zn(2+) is bound by residues H12 and H14. Residues H14, D16, and G170 each contribute to the substrate site. H197 lines the Zn(2+) pocket. The active-site Proton donor is E200. D278 contributes to the Zn(2+) binding site. Position 279 (D279) interacts with substrate.

This sequence belongs to the metallo-dependent hydrolases superfamily. Adenosine and AMP deaminases family. Adenosine deaminase subfamily. The cofactor is Zn(2+).

The enzyme catalyses adenosine + H2O + H(+) = inosine + NH4(+). It catalyses the reaction 2'-deoxyadenosine + H2O + H(+) = 2'-deoxyinosine + NH4(+). Its function is as follows. Catalyzes the hydrolytic deamination of adenosine and 2-deoxyadenosine. The sequence is that of Adenosine deaminase from Escherichia coli O7:K1 (strain IAI39 / ExPEC).